The primary structure comprises 2185 residues: Genome polyprotein (2185 aa).

Glycine 2 carries the N-myristoyl glycine; by host lipid modification. Over 2–1495 (GAQVSTQKTG…HVSRAFICLQ (1494 aa)) the chain is Cytoplasmic. The tract at residues 568 to 584 (FFQGPVEDAITAAIGRV) is amphipathic alpha-helix. Active-site for protease 2A activity residues include histidine 872 and aspartate 890. 2 residues coordinate Zn(2+): cysteine 907 and cysteine 909. Cysteine 961 functions as the For protease 2A activity in the catalytic mechanism. Residues cysteine 967 and histidine 969 each coordinate Zn(2+). A membrane-binding region spans residues 1101 to 1173 (NNSWLKKFTE…EQSAPSQSDQ (73 aa)). Residues 1101–1239 (NNSWLKKFTE…SPGAGKSVAT (139 aa)) are oligomerization. The tract at residues 1122-1126 (AVKIQ) is RNA-binding. The SF3 helicase domain maps to 1205 to 1361 (EKKMSNYIQF…SMYSQNGKIN (157 aa)). Residues cysteine 1369, cysteine 1381, and cysteine 1386 each contribute to the Zn(2+) site. Residues 1369-1386 (CDDECCPVNFKKCCPLVC) form a C4-type; degenerate zinc finger. The RNA-binding stretch occupies residues 1413 to 1420 (EYNHRHSV). The oligomerization stretch occupies residues 1424–1429 (LEALFQ). The stretch at 1496–1511 (ALTTFVSVAGIIYIIY) is an intramembrane region. Over 1512 to 2185 (KLFAGFQGAY…TLRRKWLDSF (674 aa)) the chain is Cytoplasmic. Tyrosine 1521 bears the O-(5'-phospho-RNA)-tyrosine mark. The Peptidase C3 domain maps to 1541–1719 (GPAFEFAVAM…FSAALLKHYF (179 aa)). Catalysis depends on for protease 3C activity residues histidine 1580, glutamate 1611, and cysteine 1687. Residues 1950–2066 (GHLIAFDYSG…SYPWPIDASL (117 aa)) enclose the RdRp catalytic domain. Mg(2+) is bound by residues aspartate 1956 and aspartate 2052.

Belongs to the picornaviruses polyprotein family. As to quaternary structure, interacts with capsid protein VP1 and capsid protein VP3 to form heterotrimeric protomers. Interacts with capsid protein VP0, and capsid protein VP3 to form heterotrimeric protomers. Five protomers subsequently associate to form pentamers which serve as building blocks for the capsid. Interacts with capsid protein VP2, capsid protein VP3 and capsid protein VP4 following cleavage of capsid protein VP0. Interacts with host CD55. Interacts with host CXADR. In terms of assembly, interacts with capsid protein VP1 and capsid protein VP3 in the mature capsid. As to quaternary structure, interacts with capsid protein VP0 and capsid protein VP1 to form heterotrimeric protomers. Five protomers subsequently associate to form pentamers which serve as building blocks for the capsid. Interacts with capsid protein VP4 in the mature capsid. Interacts with protein 2C; this interaction may be important for virion morphogenesis. Interacts with capsid protein VP1 and capsid protein VP3. In terms of assembly, homodimer. As to quaternary structure, homohexamer; forms a hexameric ring structure with 6-fold symmetry characteristic of AAA+ ATPases. Interacts (via N-terminus) with host RTN3 (via reticulon domain); this interaction is important for viral replication. Interacts with capsid protein VP3; this interaction may be important for virion morphogenesis. Interacts with protein 3CD. In terms of assembly, homodimer. Interacts with host GBF1. Interacts (via GOLD domain) with host ACBD3 (via GOLD domain); this interaction allows the formation of a viral protein 3A/ACBD3 heterotetramer with a 2:2 stoichiometry, which will stimulate the recruitment of host PI4KB in order to synthesize PI4P at the viral RNA replication sites. As to quaternary structure, interacts with RNA-directed RNA polymerase. Interacts with host TICAM1 (via C-terminus). In terms of assembly, interacts with protein 3AB and with RNA-directed RNA polymerase. As to quaternary structure, interacts with Viral protein genome-linked and with protein 3CD. It depends on Mg(2+) as a cofactor. Specific enzymatic cleavages in vivo by the viral proteases yield processing intermediates and the mature proteins. In terms of processing, myristoylation is required for the formation of pentamers during virus assembly. Further assembly of 12 pentamers and a molecule of genomic RNA generates the provirion. Post-translationally, during virion maturation, immature virions are rendered infectious following cleavage of VP0 into VP4 and VP2. This maturation seems to be an autocatalytic event triggered by the presence of RNA in the capsid and it is followed by a conformational change infectious virion. Myristoylation is required during RNA encapsidation and formation of the mature virus particle. In terms of processing, VPg is uridylylated by the polymerase into VPg-pUpU. This acts as a nucleotide-peptide primer for the genomic RNA replication.

It is found in the virion. The protein localises to the host cytoplasm. It localises to the host cytoplasmic vesicle membrane. The protein resides in the host nucleus. The enzyme catalyses a ribonucleoside 5'-triphosphate + H2O = a ribonucleoside 5'-diphosphate + phosphate + H(+). The catalysed reaction is Selective cleavage of Tyr-|-Gly bond in the picornavirus polyprotein.. It catalyses the reaction RNA(n) + a ribonucleoside 5'-triphosphate = RNA(n+1) + diphosphate. It carries out the reaction Selective cleavage of Gln-|-Gly bond in the poliovirus polyprotein. In other picornavirus reactions Glu may be substituted for Gln, and Ser or Thr for Gly.. Its activity is regulated as follows. Replication or transcription is subject to high level of random mutations by the nucleotide analog ribavirin. Forms an icosahedral capsid of pseudo T=3 symmetry with capsid proteins VP2 and VP3. The capsid is 300 Angstroms in diameter, composed of 60 copies of each capsid protein and enclosing the viral positive strand RNA genome. Capsid protein VP1 mainly forms the vertices of the capsid. Capsid protein VP1 interacts with host CD55 and CXADR to provide virion attachment to target host cells. This attachment induces virion internalization. Tyrosine kinases are probably involved in the entry process. After binding to its receptor, the capsid undergoes conformational changes. Capsid protein VP1 N-terminus (that contains an amphipathic alpha-helix) and capsid protein VP4 are externalized. Together, they shape a pore in the host membrane through which viral genome is translocated to host cell cytoplasm. Functionally, forms an icosahedral capsid of pseudo T=3 symmetry with capsid proteins VP2 and VP3. The capsid is 300 Angstroms in diameter, composed of 60 copies of each capsid protein and enclosing the viral positive strand RNA genome. Its function is as follows. Lies on the inner surface of the capsid shell. After binding to the host receptor, the capsid undergoes conformational changes. Capsid protein VP4 is released, Capsid protein VP1 N-terminus is externalized, and together, they shape a pore in the host membrane through which the viral genome is translocated into the host cell cytoplasm. In terms of biological role, component of immature procapsids, which is cleaved into capsid proteins VP4 and VP2 after maturation. Allows the capsid to remain inactive before the maturation step. Cysteine protease that cleaves viral polyprotein and specific host proteins. It is responsible for the autocatalytic cleavage between the P1 and P2 regions, which is the first cleavage occurring in the polyprotein. Also cleaves the host translation initiation factor EIF4G1, in order to shut down the capped cellular mRNA translation. Inhibits the host nucleus-cytoplasm protein and RNA trafficking by cleaving host members of the nuclear pores. Counteracts stress granule formation probably by antagonizing its assembly or promoting its dissassembly. Cleaves and inhibits host IFIH1/MDA5, thereby inhibiting the type-I IFN production and the establishment of the antiviral state. Cleaves and inhibits host MAVS, thereby inhibiting the type-I IFN production and the establishment of the antiviral state. Functionally, plays an essential role in the virus replication cycle by acting as a viroporin. Creates a pore in the host endoplasmic reticulum and as a consequence releases Ca2+ in the cytoplasm of infected cell. In turn, high levels of cytoplasmic calcium may trigger membrane trafficking and transport of viral ER-associated proteins to viroplasms, sites of viral genome replication. Its function is as follows. Induces and associates with structural rearrangements of intracellular membranes. Displays RNA-binding, nucleotide binding and NTPase activities. May play a role in virion morphogenesis and viral RNA encapsidation by interacting with the capsid protein VP3. In terms of biological role, localizes the viral replication complex to the surface of membranous vesicles. Together with protein 3CD binds the Cis-Active RNA Element (CRE) which is involved in RNA synthesis initiation. Acts as a cofactor to stimulate the activity of 3D polymerase, maybe through a nucleid acid chaperone activity. Localizes the viral replication complex to the surface of membranous vesicles. It inhibits host cell endoplasmic reticulum-to-Golgi apparatus transport and causes the disassembly of the Golgi complex, possibly through GBF1 interaction. This would result in depletion of MHC, trail receptors and IFN receptors at the host cell surface. Plays an essential role in viral RNA replication by recruiting ACBD3 and PI4KB at the viral replication sites, thereby allowing the formation of the rearranged membranous structures where viral replication takes place. Functionally, acts as a primer for viral RNA replication and remains covalently bound to viral genomic RNA. VPg is uridylylated prior to priming replication into VPg-pUpU. The oriI viral genomic sequence may act as a template for this. The VPg-pUpU is then used as primer on the genomic RNA poly(A) by the RNA-dependent RNA polymerase to replicate the viral genome. During genome replication, the VPg-RNA linkage is removed by the host TDP2, thereby accelerating replication. During the late stage of the replication cycle, host TDP2 is excluded from sites of viral RNA synthesis and encapsidation, allowing for the generation of progeny virions. Its function is as follows. Involved in the viral replication complex and viral polypeptide maturation. It exhibits protease activity with a specificity and catalytic efficiency that is different from protease 3C. Protein 3CD lacks polymerase activity. Protein 3CD binds to the 5'UTR of the viral genome. In terms of biological role, major viral protease that mediates proteolytic processing of the polyprotein. Cleaves host EIF5B, contributing to host translation shutoff. Cleaves also host PABPC1, contributing to host translation shutoff. Cleaves and inhibits host RIGI, thereby inhibiting the type-I IFN production and the establishment of the antiviral state. Cleaves and inhibits host MAVS, thereby inhibiting the type-I IFN production and the establishment of the antiviral state. Cleaves and inhibits host TICAM1/TRIF, thereby inhibiting the type-I IFN production. Cleaves host NLRP1, triggers host N-glycine-mediated degradation of the autoinhibitory NLRP1 N-terminal fragment. Cleaves host transcription factor TFEB, thereby disrupting host lysosomal functions and enhancing viral infection. Replicates the viral genomic RNA on the surface of intracellular membranes. May form linear arrays of subunits that propagate along a strong head-to-tail interaction called interface-I. Covalently attaches UMP to a tyrosine of VPg, which is used to prime RNA synthesis. The positive stranded RNA genome is first replicated at virus induced membranous vesicles, creating a dsRNA genomic replication form. This dsRNA is then used as template to synthesize positive stranded RNA genomes. ss(+)RNA genomes are either translated, replicated or encapsidated. This Coxsackievirus B3 (strain Nancy) protein is Genome polyprotein.